The following is a 313-amino-acid chain: Fucose-specific lectin (313 aa).

6 repeat units span residues Phe5–Glu57, Ala58–Lys109, Val110–Ser162, Thr163–Ser208, Ala209–Pro260, and Ser261–Val304. Residues Phe5–Val304 form a 6 X approximate tandem repeats region. Residues Arg25, Glu37, Arg78, Glu90, Trp98, Gln102, Arg132, Glu147, and Trp154 each coordinate beta-L-fucose. The alpha-L-fucose site is built by Arg78 and Glu90. Gln102 is a binding site for alpha-L-fucose. Residues Trp154, Arg180, and Glu192 each contribute to the alpha-L-fucose site. Position 200 (Trp200) interacts with beta-L-fucose. Gly204 is a binding site for alpha-L-fucose. Beta-L-fucose is bound by residues Arg227 and Glu239. Trp246 is a binding site for alpha-L-fucose. Trp299 is a beta-L-fucose binding site.

The protein belongs to the fungal fucose-specific lectin family. Forms homodimers. The two AAL monomers are associated via interactions between N-terminal and C-terminal peptides. Tyr-7 interacts via aromatic ring stacking with its counterpart on the other monomer, whereas Ser-284 interacts via hydrogen bonding with Asp-264 on the other monomer.

In terms of biological role, lectin that specifically binds to L-fucose. Has strongest preference for the alpha-1,6-fucosylated chain (core fucose) on glycoproteins among alpha-1,2-, alpha-1,3-, alpha-1,4-, and alpha-1,6-fucosylated chains. Might play a role in the differentiation of the fruiting body. Exhibits antifungal activity against Mucor racemosus and thus could act as an antifungal protein in natural ecosystems. The polypeptide is Fucose-specific lectin (Aleuria aurantia (Orange peel mushroom)).